The chain runs to 81 residues: Photosystem I iron-sulfur center (81 aa).

2 4Fe-4S ferredoxin-type domains span residues 2-31 and 39-68; these read SHAV…MVPW and IASS…IRVY. Residues Cys-11, Cys-14, Cys-17, Cys-21, Cys-48, Cys-51, Cys-54, and Cys-58 each coordinate [4Fe-4S] cluster.

The cyanobacterial PSI reaction center is composed of one copy each of PsaA,B,C,D,E,F,I,J,K,L,M and X, and forms trimeric complexes. The cofactor is [4Fe-4S] cluster.

Its subcellular location is the cellular thylakoid membrane. The enzyme catalyses reduced [plastocyanin] + hnu + oxidized [2Fe-2S]-[ferredoxin] = oxidized [plastocyanin] + reduced [2Fe-2S]-[ferredoxin]. Functionally, apoprotein for the two 4Fe-4S centers FA and FB of photosystem I (PSI); essential for photochemical activity. FB is the terminal electron acceptor of PSI, donating electrons to ferredoxin. The C-terminus interacts with PsaA/B/D and helps assemble the protein into the PSI complex. Required for binding of PsaD and PsaE to PSI. PSI is a plastocyanin/cytochrome c6-ferredoxin oxidoreductase, converting photonic excitation into a charge separation, which transfers an electron from the donor P700 chlorophyll pair to the spectroscopically characterized acceptors A0, A1, FX, FA and FB in turn. The sequence is that of Photosystem I iron-sulfur center from Prochlorococcus marinus (strain MIT 9312).